The following is a 142-amino-acid chain: Putative pre-16S rRNA nuclease (142 aa).

The protein belongs to the YqgF nuclease family.

The protein localises to the cytoplasm. Could be a nuclease involved in processing of the 5'-end of pre-16S rRNA. The sequence is that of Putative pre-16S rRNA nuclease from Desulfitobacterium hafniense (strain DSM 10664 / DCB-2).